Consider the following 394-residue polypeptide: Acid ceramidase (394 aa).

An N-terminal signal peptide occupies residues 1–18 (MRGQSLLTWVLAAAVTCA). C30 and C339 are disulfide-bonded. The active-site Nucleophile is C142. N-linked (GlcNAc...) asparagine glycosylation is found at N172, N194, N258, N341, and N347. C387 and C391 are disulfide-bonded.

It belongs to the acid ceramidase family. Heterodimer; disulfide-linked. The heterodimer is composed of the disulfide-linked alpha and beta chains produced by autocatalytic cleavage of the precursor. Post-translationally, N-glycosylated. In terms of processing, proteolytically cleaved into two chains alpha and beta that remain associated via a disulfide bond. Cleavage gives rise to a conformation change that activates the enzyme. The same catalytic Cys residue mediates the autoproteolytic cleavage and subsequent hydrolysis of lipid substrates. The beta chain may undergo an additional C-terminal processing. As to expression, widely expressed.

It localises to the lysosome. The protein resides in the secreted. It carries out the reaction an N-acylsphing-4-enine + H2O = sphing-4-enine + a fatty acid. It catalyses the reaction N-dodecanoylsphing-4-enine + H2O = dodecanoate + sphing-4-enine. The enzyme catalyses N-(9Z-octadecenoyl)-sphing-4-enine + H2O = sphing-4-enine + (9Z)-octadecenoate. The catalysed reaction is N-tetradecanoylsphing-4-enine + H2O = tetradecanoate + sphing-4-enine. It carries out the reaction N-hexadecanoylsphing-4-enine + H2O = sphing-4-enine + hexadecanoate. It catalyses the reaction N-octadecanoylsphing-4-enine + H2O = sphing-4-enine + octadecanoate. The enzyme catalyses N-dodecanoyl-(4R)-hydroxysphinganine + H2O = (4R)-hydroxysphinganine + dodecanoate. The catalysed reaction is N-(dodecanoyl)-sphinganine + H2O = dodecanoate + sphinganine. It carries out the reaction N-(acetyl)-sphing-4-enine + H2O = sphing-4-enine + acetate. It catalyses the reaction N-(hexanoyl)sphing-4-enine + H2O = hexanoate + sphing-4-enine. The enzyme catalyses N-octanoylsphing-4-enine + H2O = octanoate + sphing-4-enine. The catalysed reaction is N-dodecanoylethanolamine + H2O = dodecanoate + ethanolamine. Its pathway is lipid metabolism; sphingolipid metabolism. Functionally, lysosomal ceramidase that hydrolyzes sphingolipid ceramides into sphingosine and free fatty acids at acidic pH. Ceramides, sphingosine, and its phosphorylated form sphingosine-1-phosphate are bioactive lipids that mediate cellular signaling pathways regulating several biological processes including cell proliferation, apoptosis and differentiation. Has a higher catalytic efficiency towards C12-ceramides versus other ceramides. Also catalyzes the reverse reaction allowing the synthesis of ceramides from fatty acids and sphingosine. For the reverse synthetic reaction, the natural sphingosine D-erythro isomer is more efficiently utilized as a substrate compared to D-erythro-dihydrosphingosine and D-erythro-phytosphingosine, while the fatty acids with chain lengths of 12 or 14 carbons are the most efficiently used. Also has an N-acylethanolamine hydrolase activity. By regulating the levels of ceramides, sphingosine and sphingosine-1-phosphate in the epidermis, mediates the calcium-induced differentiation of epidermal keratinocytes. Also indirectly regulates tumor necrosis factor/TNF-induced apoptosis. By regulating the intracellular balance between ceramides and sphingosine, in adrenocortical cells, probably also acts as a regulator of steroidogenesis. In Mus musculus (Mouse), this protein is Acid ceramidase.